Consider the following 102-residue polypeptide: Circadian clock oscillator protein KaiA (102 aa).

A KaiA C-terminal domain is found at 1-102; sequence MTQEVDQQIL…CEAYRGAIFK (102 aa).

It belongs to the KaiA family. As to quaternary structure, homodimer. The KaiABC complex composition changes during the circadian cycle to control KaiC phosphorylation. Complexes KaiC(6), KaiA(2-4):KaiC(6), KaiB(6):KaiC(6) and KaiC(6):KaiB(6):KaiA(12) are among the most important forms, many form cooperatively. KaiA and CikA bind to the same region of the KaiB(fs) form and therefore compete.

Its function is as follows. Key component of the KaiABC oscillator complex, which constitutes the main circadian regulator in cyanobacteria. Complex composition changes during the circadian cycle to control KaiC phosphorylation. KaiA stimulates KaiC autophosphorylation, while KaiB sequesters KaiA, leading to KaiC autodephosphorylation. KaiA binding to the KaiC CII domain during the subjective day yields KaiA(2-4):KaiC(6) complexes which stimulate KaiC autophosphorylation. Phospho-Ser-431 KaiC accumulation triggers binding of KaiB during the subjective night to form the KaiB(6):KaiC(6) complex, leading to changes in the output regulators CikA and SasA. KaiB(6):KaiC(6) formation exposes a site for KaiA binding on KaiB that sequesters KaiA from KaiC's CII domain, making the KaiC(6):KaiB(6):KaiA(12) complex resulting in KaiC autodephosphorylation. Complete dephosphorylation of KaiC leads to dissociation of KaiA(2):KaiB(1), completing 1 cycle of the Kai oscillator. In Nostoc sp. (strain PCC 7120 / SAG 25.82 / UTEX 2576), this protein is Circadian clock oscillator protein KaiA.